A 405-amino-acid chain; its full sequence is Phosphopentomutase (405 aa).

Mn(2+) contacts are provided by Asp10, Asp303, His308, Asp344, His345, and His356.

This sequence belongs to the phosphopentomutase family. Mn(2+) serves as cofactor.

The protein localises to the cytoplasm. It carries out the reaction 2-deoxy-alpha-D-ribose 1-phosphate = 2-deoxy-D-ribose 5-phosphate. It catalyses the reaction alpha-D-ribose 1-phosphate = D-ribose 5-phosphate. It participates in carbohydrate degradation; 2-deoxy-D-ribose 1-phosphate degradation; D-glyceraldehyde 3-phosphate and acetaldehyde from 2-deoxy-alpha-D-ribose 1-phosphate: step 1/2. In terms of biological role, isomerase that catalyzes the conversion of deoxy-ribose 1-phosphate (dRib-1-P) and ribose 1-phosphate (Rib-1-P) to deoxy-ribose 5-phosphate (dRib-5-P) and ribose 5-phosphate (Rib-5-P), respectively. This is Phosphopentomutase from Shewanella frigidimarina (strain NCIMB 400).